The chain runs to 472 residues: Peptidoglycan endopeptidase RipA (472 aa).

The tat-type signal signal peptide spans 1–39 (MRRNRRGSPARPAARFVRPAIPSALSVALLVCTPGLATA). One can recognise a NlpC/P60 domain in the interval 340–472 (RQASEYVIRR…TPYVVRYIEY (133 aa)). Catalysis depends on Cys-383, which acts as the Nucleophile. His-432 (proton acceptor) is an active-site residue. Glu-444 is an active-site residue.

The protein belongs to the peptidase C40 family. In terms of assembly, monomer. Interacts with RpfB and PBP1A (ponA1) via residues 448-472 of RipA, interacts with RpfE. Interacts with the chaperone MoxR1. RipA-MoxR1 interaction in the cytoplasm leads to proper folding of RipA, resulting in its secretion. Also interacts with Mce2B. Exported by the Tat system. The position of the signal peptide cleavage has not been experimentally proven.

It localises to the secreted. With respect to regulation, moxR1-mediated folding is critical for secretion via the TAT system. The synergistic effects on peptidoglycan degradation of RipA plus RpfB are inhibited by addition of PBP1A (ponA1). Its function is as follows. Peptidoglycan endopeptidase that cleaves the bond between D-glutamate and meso-diaminopimelate. Binds and degrades high-molecular weight peptidoglycan from a number of Actinobacteria; activity is increased in the presence of RpfB and inhibited by PBP1A (ponA1). Required for normal separation of daughter cells after cell division and for cell wall integrity. Required for host cell invasion and intracellular survival in host macrophages. This is Peptidoglycan endopeptidase RipA (ripA) from Mycobacterium tuberculosis (strain ATCC 25618 / H37Rv).